We begin with the raw amino-acid sequence, 101 residues long: NADH-quinone oxidoreductase subunit K (101 aa).

The next 3 membrane-spanning stretches (helical) occupy residues 4 to 24 (LAHYLVLGAILFAIAIVGIFL), 29 to 49 (IIIILMAIELMLLAVNTNFVA), and 61 to 81 (IFVFFVLTVAAAEAAIGLAIL).

This sequence belongs to the complex I subunit 4L family. In terms of assembly, NDH-1 is composed of 14 different subunits. Subunits NuoA, H, J, K, L, M, N constitute the membrane sector of the complex.

The protein resides in the cell inner membrane. The enzyme catalyses a quinone + NADH + 5 H(+)(in) = a quinol + NAD(+) + 4 H(+)(out). Functionally, NDH-1 shuttles electrons from NADH, via FMN and iron-sulfur (Fe-S) centers, to quinones in the respiratory chain. The immediate electron acceptor for the enzyme in this species is believed to be ubiquinone. Couples the redox reaction to proton translocation (for every two electrons transferred, four hydrogen ions are translocated across the cytoplasmic membrane), and thus conserves the redox energy in a proton gradient. The sequence is that of NADH-quinone oxidoreductase subunit K from Burkholderia ambifaria (strain MC40-6).